The chain runs to 344 residues: S-methyl-5'-thioadenosine phosphorylase (344 aa).

Residues Thr-51, 99 to 100 (RH), and 132 to 133 (SA) contribute to the phosphate site. Position 234 (Met-234) interacts with substrate. Ser-235 is a phosphate binding site. 258–260 (DYD) provides a ligand contact to substrate.

This sequence belongs to the PNP/MTAP phosphorylase family. MTAP subfamily. As to quaternary structure, homotrimer.

It localises to the cytoplasm. The protein resides in the nucleus. It catalyses the reaction S-methyl-5'-thioadenosine + phosphate = 5-(methylsulfanyl)-alpha-D-ribose 1-phosphate + adenine. The protein operates within amino-acid biosynthesis; L-methionine biosynthesis via salvage pathway; S-methyl-5-thio-alpha-D-ribose 1-phosphate from S-methyl-5'-thioadenosine (phosphorylase route): step 1/1. In terms of biological role, catalyzes the reversible phosphorylation of S-methyl-5'-thioadenosine (MTA) to adenine and 5-methylthioribose-1-phosphate. Involved in the breakdown of MTA, a major by-product of polyamine biosynthesis. Responsible for the first step in the methionine salvage pathway after MTA has been generated from S-adenosylmethionine. Has broad substrate specificity with 6-aminopurine nucleosides as preferred substrates. The polypeptide is S-methyl-5'-thioadenosine phosphorylase (Phaeosphaeria nodorum (strain SN15 / ATCC MYA-4574 / FGSC 10173) (Glume blotch fungus)).